The following is a 283-amino-acid chain: Elongation factor Ts (283 aa).

The tract at residues Thr-79 to Val-82 is involved in Mg(2+) ion dislocation from EF-Tu.

It belongs to the EF-Ts family.

Its subcellular location is the cytoplasm. In terms of biological role, associates with the EF-Tu.GDP complex and induces the exchange of GDP to GTP. It remains bound to the aminoacyl-tRNA.EF-Tu.GTP complex up to the GTP hydrolysis stage on the ribosome. This chain is Elongation factor Ts, found in Shewanella denitrificans (strain OS217 / ATCC BAA-1090 / DSM 15013).